Consider the following 332-residue polypeptide: Cytochrome c1, heme protein, mitochondrial (332 aa).

The N-terminal 70 residues, 1-70 (MLARTCLRST…YYHLYGFASA (70 aa)), are a transit peptide targeting the mitochondrion. At 71–277 (MTPAEEGLHA…AEPEMDDRKR (207 aa)) the chain is on the mitochondrial intermembrane side. Residues 97–250 (QALRRGFQVY…GLVDYEDGTP (154 aa)) form the Cytochrome c domain. Positions 110, 113, and 114 each coordinate heme c. The segment covering 139–151 (EENEYDTEPNDQG) has biased composition (acidic residues). Residues 139–162 (EENEYDTEPNDQGEIEKRPGKLSD) are disordered. Heme c is bound at residue Met234. A helical transmembrane segment spans residues 278–296 (MGMKVLVVTSVLFALSVYV). The Mitochondrial matrix portion of the chain corresponds to 297-332 (KRYKWAWLKSRKIVYDPPKSPPPATNLALPQQRAKS).

This sequence belongs to the cytochrome c family. Component of the ubiquinol-cytochrome c oxidoreductase (cytochrome b-c1 complex, complex III, CIII), a multisubunit enzyme composed of 10 subunits. The complex is composed of 3 respiratory subunits cytochrome b (cob), cytochrome c1 (cyt-1) and Rieske protein (fes-1), 2 core protein subunits pep and ucr-1, and 5 low-molecular weight protein subunits qcr6, qcr7, qcr8, qcr9 and probably NCU16844/qcr10. The complex exists as an obligatory dimer and forms supercomplexes (SCs) in the inner mitochondrial membrane with NADH-ubiquinone oxidoreductase (complex I, CI) and cytochrome c oxidase (complex IV, CIV), resulting in different assemblies (supercomplexes SCI(1)III(2), SCIII(2)IV(1) and SCIII(2)IV(2) as well as higher order I(x)III(y)IV(z) megacomplexes). It depends on heme c as a cofactor.

It is found in the mitochondrion inner membrane. It catalyses the reaction a quinol + 2 Fe(III)-[cytochrome c](out) = a quinone + 2 Fe(II)-[cytochrome c](out) + 2 H(+)(out). In terms of biological role, component of the ubiquinol-cytochrome c oxidoreductase, a multisubunit transmembrane complex that is part of the mitochondrial electron transport chain which drives oxidative phosphorylation. The respiratory chain contains 3 multisubunit complexes succinate dehydrogenase (complex II, CII), ubiquinol-cytochrome c oxidoreductase (cytochrome b-c1 complex, complex III, CIII) and cytochrome c oxidase (complex IV, CIV), that cooperate to transfer electrons derived from NADH and succinate to molecular oxygen, creating an electrochemical gradient over the inner membrane that drives transmembrane transport and the ATP synthase. The cytochrome b-c1 complex catalyzes electron transfer from ubiquinol to cytochrome c, linking this redox reaction to translocation of protons across the mitochondrial inner membrane, with protons being carried across the membrane as hydrogens on the quinol. In the process called Q cycle, 2 protons are consumed from the matrix, 4 protons are released into the intermembrane space and 2 electrons are passed to cytochrome c. Cytochrome c1 is a catalytic core subunit containing a c-type heme. It transfers electrons from the [2Fe-2S] iron-sulfur cluster of the Rieske protein to cytochrome c. This is Cytochrome c1, heme protein, mitochondrial (cyt-1) from Neurospora crassa (strain ATCC 24698 / 74-OR23-1A / CBS 708.71 / DSM 1257 / FGSC 987).